A 246-amino-acid chain; its full sequence is Major prion protein (246 aa).

The N-terminal stretch at 1–15 (MLVLFVATWSDLGLC) is a signal peptide. An interaction with GRB2, ERI3 and SYN1 region spans residues 16–223 (KKRPKPGGWN…ESQAYYQRGS (208 aa)). A disordered region spans residues 18-102 (RPKPGGWNTG…HKPSKPKTSM (85 aa)). 5 repeat units span residues 44 to 52 (PQGGGGWGQ), 53 to 60 (PHGGGWGQ), 61 to 68 (PHGGGWGQ), 69 to 76 (PHGGGWGQ), and 77 to 84 (PHGGGWGQ). A 5 X 8 AA tandem repeats of P-H-G-G-G-W-G-Q region spans residues 44 to 84 (PQGGGGWGQPHGGGWGQPHGGGWGQPHGGGWGQPHGGGWGQ). The span at 45–88 (QGGGGWGQPHGGGWGQPHGGGWGQPHGGGWGQPHGGGWGQGGGT) shows a compositional bias: gly residues. Residues His-54, Gly-55, Gly-56, His-62, Gly-63, Gly-64, His-70, Gly-71, Gly-72, His-78, Gly-79, and Gly-80 each contribute to the Cu(2+) site. The span at 91–102 (QWHKPSKPKTSM) shows a compositional bias: basic residues. A disulfide bridge connects residues Cys-172 and Cys-207. N-linked (GlcNAc...) asparagine glycosylation is found at Asn-174 and Asn-190. The GPI-anchor amidated serine moiety is linked to residue Ser-223. Residues 224-246 (SMVLFSSPPVILLISFLIFLIVG) constitute a propeptide, removed in mature form.

The protein belongs to the prion family. In terms of assembly, monomer and homodimer. Has a tendency to aggregate into amyloid fibrils containing a cross-beta spine, formed by a steric zipper of superposed beta-strands. Soluble oligomers may represent an intermediate stage on the path to fibril formation. Copper binding may promote oligomerization. Interacts with GRB2, APP, ERI3/PRNPIP and SYN1. Mislocalized cytosolically exposed PrP interacts with MGRN1; this interaction alters MGRN1 subcellular location and causes lysosomal enlargement. Interacts with KIAA1191.

It localises to the cell membrane. The protein resides in the golgi apparatus. In terms of biological role, its primary physiological function is unclear. Has cytoprotective activity against internal or environmental stresses. May play a role in neuronal development and synaptic plasticity. May be required for neuronal myelin sheath maintenance. May play a role in iron uptake and iron homeostasis. Soluble oligomers are toxic to cultured neuroblastoma cells and induce apoptosis (in vitro). Association with GPC1 (via its heparan sulfate chains) targets PRNP to lipid rafts. Also provides Cu(2+) or Zn(2+) for the ascorbate-mediated GPC1 deaminase degradation of its heparan sulfate side chains. This Cercocebus atys (Sooty mangabey) protein is Major prion protein (PRNP).